Consider the following 305-residue polypeptide: Sulfate adenylyltransferase subunit 2 (305 aa).

The protein belongs to the PAPS reductase family. CysD subfamily. In terms of assembly, heterodimer composed of CysD, the smaller subunit, and CysN.

The enzyme catalyses sulfate + ATP + H(+) = adenosine 5'-phosphosulfate + diphosphate. It functions in the pathway sulfur metabolism; hydrogen sulfide biosynthesis; sulfite from sulfate: step 1/3. Functionally, with CysN forms the ATP sulfurylase (ATPS) that catalyzes the adenylation of sulfate producing adenosine 5'-phosphosulfate (APS) and diphosphate, the first enzymatic step in sulfur assimilation pathway. APS synthesis involves the formation of a high-energy phosphoric-sulfuric acid anhydride bond driven by GTP hydrolysis by CysN coupled to ATP hydrolysis by CysD. The chain is Sulfate adenylyltransferase subunit 2 from Pseudomonas entomophila (strain L48).